We begin with the raw amino-acid sequence, 1028 residues long: Contactin-3 (1028 aa).

Positions 1–19 (MMLSWKQLILLSFIGCLAG) are cleaved as a signal peptide. 6 consecutive Ig-like C2-type domains span residues 26–117 (PVFV…AKLQ), 122–208 (ENFK…ARVL), 227–313 (PKIE…GRLT), 318–402 (PYWV…AELK), 408–497 (PDFS…LVVT), and 499–593 (PTRI…AELI). 5 disulfides stabilise this stretch: cysteine 50–cysteine 100, cysteine 144–cysteine 196, cysteine 249–cysteine 297, cysteine 339–cysteine 386, and cysteine 431–cysteine 479. Asparagine 65 and asparagine 193 each carry an N-linked (GlcNAc...) asparagine glycan. N-linked (GlcNAc...) asparagine glycans are attached at residues asparagine 377, asparagine 468, asparagine 489, and asparagine 538. The cysteines at positions 521 and 577 are disulfide-linked. Fibronectin type-III domains follow at residues 600-698 (PPEN…TEEA), 703-800 (APSE…SAEE), 805-901 (APSH…TKKT), and 902-998 (PPSQ…TSMD). Positions 684 to 714 (GEPSLPSEKVRTEEAAPEVAPSEVSGGGGSR) are disordered. 6 N-linked (GlcNAc...) asparagine glycosylation sites follow: asparagine 765, asparagine 860, asparagine 895, asparagine 913, asparagine 931, and asparagine 956. The GPI-anchor amidated serine moiety is linked to residue serine 1002. The propeptide at 1003 to 1028 (TSAISDIHPVSGYISVLLFFIVNALW) is removed in mature form.

It belongs to the immunoglobulin superfamily. Contactin family. Interacts with PTPRG. As to expression, specifically expressed in brain. Not expressed in peripheral tissues such as heart, lung, liver, spleen, kidney and skeletal muscle. In brain, it is restricted to subsets of neurons such as Purkinje cells of the cerebellum, granule cells of the dentate gyrus, and neurons in the superficial layers of the cerebral cortex.

The protein localises to the cell membrane. Contactins mediate cell surface interactions during nervous system development. Has some neurite outgrowth-promoting activity. The sequence is that of Contactin-3 (Cntn3) from Rattus norvegicus (Rat).